Consider the following 1216-residue polypeptide: ATP-dependent helicase/nuclease subunit A (1216 aa).

A UvrD-like helicase ATP-binding domain is found at 26-488; the sequence is QKKTAEQIEA…ILLKENFRSS (463 aa). Residue 47 to 54 participates in ATP binding; that stretch reads ASAGSGKT. The region spanning 515-802 is the UvrD-like helicase C-terminal domain; it reads KHQLVFANTK…ELMTIHKSKG (288 aa).

The protein belongs to the helicase family. AddA subfamily. In terms of assembly, heterodimer of AddA and AddB/RexB. Mg(2+) serves as cofactor.

It catalyses the reaction Couples ATP hydrolysis with the unwinding of duplex DNA by translocating in the 3'-5' direction.. It carries out the reaction ATP + H2O = ADP + phosphate + H(+). The heterodimer acts as both an ATP-dependent DNA helicase and an ATP-dependent, dual-direction single-stranded exonuclease. Recognizes the chi site generating a DNA molecule suitable for the initiation of homologous recombination. The AddA nuclease domain is required for chi fragment generation; this subunit has the helicase and 3' -&gt; 5' nuclease activities. The sequence is that of ATP-dependent helicase/nuclease subunit A from Streptococcus pneumoniae (strain Hungary19A-6).